The sequence spans 196 residues: Nucleoside triphosphate pyrophosphatase (196 aa).

The active-site Proton acceptor is the D73.

Belongs to the Maf family. It depends on a divalent metal cation as a cofactor.

The protein localises to the cytoplasm. It carries out the reaction a ribonucleoside 5'-triphosphate + H2O = a ribonucleoside 5'-phosphate + diphosphate + H(+). The catalysed reaction is a 2'-deoxyribonucleoside 5'-triphosphate + H2O = a 2'-deoxyribonucleoside 5'-phosphate + diphosphate + H(+). Its function is as follows. Nucleoside triphosphate pyrophosphatase. May have a dual role in cell division arrest and in preventing the incorporation of modified nucleotides into cellular nucleic acids. The polypeptide is Nucleoside triphosphate pyrophosphatase (Anaplasma marginale (strain St. Maries)).